The following is a 1184-amino-acid chain: uncharacterized protein (1184 aa).

Disordered regions lie at residues 115-152 and 397-426; these read ETSS…AHVS and TYKP…VPER. Composition is skewed to polar residues over residues 137–152 and 397–421; these read HVMN…AHVS and TYKP…TSHN. Ser-686 is modified (phosphoserine). Basic and acidic residues-rich tracts occupy residues 705–767, 783–792, 849–863, and 891–902; these read LSER…ESAH, FEHETEPSHY, SHAH…RDLG, and YLHDEKTRDTLT. Disordered stretches follow at residues 705 to 870 and 890 to 1017; these read LSER…FGDV and DYLH…SSPK. Ser-905 is subject to Phosphoserine. Residues 920-932 are compositionally biased toward basic and acidic residues; sequence EDHPHASEAERAH. A compositionally biased stretch (low complexity) spans 941 to 950; sequence SSESSPESQS. Positions 999 to 1011 are enriched in basic and acidic residues; it reads PRERLDDNAKEIL. Phosphoserine is present on Ser-1018. Disordered stretches follow at residues 1029–1107 and 1135–1154; these read NRKD…IGTQ and DVDN…KSRP. Basic and acidic residues predominate over residues 1032–1045; the sequence is DKAAVKRMLEEDSS. The span at 1073–1107 shows a compositional bias: polar residues; that stretch reads PAVNNSTKPVAVTSKNGHSRNGSHAAHSNNVIGTQ. Low complexity predominate over residues 1138 to 1150; that stretch reads NVVSGHSNVNGVS.

It localises to the cytoplasm. This is an uncharacterized protein from Schizosaccharomyces pombe (strain 972 / ATCC 24843) (Fission yeast).